We begin with the raw amino-acid sequence, 665 residues long: Target of rapamycin complex 2 subunit sin1 (665 aa).

Ser62 is subject to Phosphoserine. 2 stretches are compositionally biased toward polar residues: residues Ile65–Val83 and Tyr100–Ser109. The segment at Ile65 to Gly112 is disordered. Phosphoserine is present on Ser133. In terms of domain architecture, CRIM spans Thr255–Gln392. The segment at Tyr395–Asp433 is disordered. 4 positions are modified to phosphoserine: Ser404, Ser490, Ser502, and Ser530. The tract at residues Arg517–Gly537 is disordered. Positions Ser522 to Tyr536 are enriched in polar residues. In terms of domain architecture, SIN1-type PH spans Thr558–Asn659.

The protein belongs to the SIN1 family. The target of rapamycin complex 2 (TORC2) is composed of at least bit61, pop3/wat1, sin1, ste20 and tor1. Interacts with the sty1 MAP kinase. Post-translationally, phosphorylated; under environmental stress. Either Ser-61 or Ser-62 and Ser-298, Ser-299 or Ser-301 are phosphorylated as well.

Its function is as follows. Component of the mechanistic target of rapamycin complex 2 (mTORC2), which regulates multiple cellular processes to control cell growth in response to environmental signals. In response to signals, TORC2 phosphorylates AGC protein kinase family members, such as gad8. TORC2 is required for cell survival under various stress conditions. TORC2 positively controls G1 cell-cycle arrest, sexual development and amino acid uptake. Positively regulates amino acid uptake through the control of expression of amino acid permeases. Within the mTORC2 complex, sin1 acts as a substrate adapter which recognizes and binds AGC protein kinase family members for phosphorylation by tor1. The sequence is that of Target of rapamycin complex 2 subunit sin1 from Schizosaccharomyces pombe (strain 972 / ATCC 24843) (Fission yeast).